Here is a 435-residue protein sequence, read N- to C-terminus: Methionine aminopeptidase 2 (435 aa).

Positions 1–87 (MAAQVADGVA…TQTKPPRVPV (87 aa)) are disordered. The segment covering 10–19 (ADLKLDDTKS) has biased composition (basic and acidic residues). The segment covering 20–29 (KPTNGTTQNG) has biased composition (polar residues). Residues 32–46 (EHEDSDDDNEGEEGA) are compositionally biased toward acidic residues. Basic residues predominate over residues 55 to 68 (KKKKKRKPRKKKKA). His-199 is a binding site for substrate. A divalent metal cation contacts are provided by Asp-219, Asp-230, and His-299. Residue His-307 coordinates substrate. The a divalent metal cation site is built by Glu-332 and Glu-427.

It belongs to the peptidase M24A family. Methionine aminopeptidase eukaryotic type 2 subfamily. The cofactor is Co(2+). Requires Zn(2+) as cofactor. Mn(2+) is required as a cofactor. Fe(2+) serves as cofactor.

It localises to the cytoplasm. The catalysed reaction is Release of N-terminal amino acids, preferentially methionine, from peptides and arylamides.. Cotranslationally removes the N-terminal methionine from nascent proteins. The N-terminal methionine is often cleaved when the second residue in the primary sequence is small and uncharged (Met-Ala-, Cys, Gly, Pro, Ser, Thr, or Val). The protein is Methionine aminopeptidase 2 of Phaeosphaeria nodorum (strain SN15 / ATCC MYA-4574 / FGSC 10173) (Glume blotch fungus).